Reading from the N-terminus, the 363-residue chain is Adenylate cyclase 2 (363 aa).

One can recognise a Guanylate cyclase domain in the interval 157–286 (VFLFIDLAGS…DTVNTTARLE (130 aa)). Positions 162 and 206 each coordinate Mg(2+). The tract at residues 341 to 363 (GDGATEPAGETVRSPAAEAFTSL) is disordered.

This sequence belongs to the adenylyl cyclase class-3 family. Mg(2+) is required as a cofactor.

It catalyses the reaction ATP = 3',5'-cyclic AMP + diphosphate. In terms of biological role, plays essential roles in regulation of cellular metabolism by catalyzing the synthesis of a second messenger, cAMP. This is Adenylate cyclase 2 (cya2) from Rhizobium meliloti (strain 1021) (Ensifer meliloti).